The chain runs to 452 residues: Exodeoxyribonuclease 7 large subunit (452 aa).

This sequence belongs to the XseA family. In terms of assembly, heterooligomer composed of large and small subunits.

It is found in the cytoplasm. It carries out the reaction Exonucleolytic cleavage in either 5'- to 3'- or 3'- to 5'-direction to yield nucleoside 5'-phosphates.. Its function is as follows. Bidirectionally degrades single-stranded DNA into large acid-insoluble oligonucleotides, which are then degraded further into small acid-soluble oligonucleotides. This is Exodeoxyribonuclease 7 large subunit from Bacillus cereus (strain G9842).